An 801-amino-acid chain; its full sequence is H(+)/Cl(-) exchange transporter 3 (801 aa).

The Cytoplasmic portion of the chain corresponds to 1-125; the sequence is MESEQLFHRG…WEMTKSLYDA (125 aa). 3 consecutive short sequence motifs (di-leucine internalization motif; mediates targeting to late endosome and lysosome membranes) follow at residues 28 to 29, 46 to 47, and 71 to 75; these read LL and LLDLL. A helical transmembrane segment spans residues 126-163; sequence WSGWLVVTLTGLASGALAGLIDIAADWMTDLKEGICLS. An N-linked (GlcNAc...) asparagine glycan is attached at Asn-177. Residues 209–232 form a helical membrane-spanning segment; that stretch reads MNYIMYIFWALSFAFLAVSLVKVF. Positions 238–242 match the Selectivity filter part_1 motif; that stretch reads GSGIP. Ser-239 is a binding site for chloride. An intramembrane region (helical) is located at residues 241–248; that stretch reads IPEIKTIL. 2 helical membrane passes run 258 to 276 and 282 to 301; these read GKWTLMIKTVTLVLAVASG and EGPLVHVACCCGNIFSYLFP. The Selectivity filter part_2 signature appears at 280–284; that stretch reads GKEGP. Intramembrane regions (helical) lie at residues 313 to 325 and 329 to 337; these read VLSAASAAGVSVA and PIGGVLFSL. The next 3 membrane-spanning stretches (helical) occupy residues 349–367, 391–416, and 423–443; these read LWRSFFAALVAAFVLRSIN, FPFILLGVFGGLWGAFFIRANIAWCR, and FGKYPVLEVIIVAAITAVIAF. N-linked (GlcNAc...) asparagine glycans are attached at residues Asn-451 and Asn-479. A helical membrane pass occupies residues 500–520; that stretch reads IWQLCLALIFKIIMTVFTFGI. The Selectivity filter part_3 signature appears at 525–529; it reads GLFIP. Phe-527 lines the chloride pocket. Intramembrane regions (helical) lie at residues 555–569 and 573–584; these read GLYAMVGAAACLGGV and TVSLVVIVFELT. The segment at residues 585-588 is an intramembrane region (note=Loop between two helices); it reads GGLE. A helical transmembrane segment spans residues 589-607; the sequence is YIVPLMAAVMTSKWVGDAF. At 608-801 the chain is on the cytoplasmic side; sequence GREGIYEAHI…NQDPASIMFN (194 aa). Tyr-613 provides a ligand contact to chloride. CBS domains lie at 641–705 and 738–795; these read MRPR…ARKK and LDMS…NQDP. ATP is bound by residues 672 to 674 and 779 to 782; these read YNG and TKKD.

Belongs to the chloride channel (TC 2.A.49) family. ClC-3/CLCN3 subfamily. As to quaternary structure, monomer and homodimer. Forms heterodimers with CLCN4. Post-translationally, N-glycosylated.

The protein localises to the early endosome membrane. It localises to the late endosome membrane. Its subcellular location is the lysosome membrane. The protein resides in the cell membrane. Functionally, strongly outwardly rectifying, electrogenic H(+)/Cl(-)exchanger which mediates the exchange of chloride ions against protons. The CLC channel family contains both chloride channels and proton-coupled anion transporters that exchange chloride or another anion for protons. The presence of conserved gating glutamate residues is typical for family members that function as antiporters. This chain is H(+)/Cl(-) exchange transporter 3 (CLCN3), found in Pongo abelii (Sumatran orangutan).